The primary structure comprises 311 residues: Aspartate carbamoyltransferase catalytic subunit (311 aa).

Residues Arg-58 and Thr-59 each coordinate carbamoyl phosphate. Lys-86 provides a ligand contact to L-aspartate. Arg-108, His-136, and Gln-139 together coordinate carbamoyl phosphate. L-aspartate contacts are provided by Arg-169 and Arg-223. Positions 264 and 265 each coordinate carbamoyl phosphate.

This sequence belongs to the aspartate/ornithine carbamoyltransferase superfamily. ATCase family. Heterododecamer (2C3:3R2) of six catalytic PyrB chains organized as two trimers (C3), and six regulatory PyrI chains organized as three dimers (R2).

It catalyses the reaction carbamoyl phosphate + L-aspartate = N-carbamoyl-L-aspartate + phosphate + H(+). It participates in pyrimidine metabolism; UMP biosynthesis via de novo pathway; (S)-dihydroorotate from bicarbonate: step 2/3. In terms of biological role, catalyzes the condensation of carbamoyl phosphate and aspartate to form carbamoyl aspartate and inorganic phosphate, the committed step in the de novo pyrimidine nucleotide biosynthesis pathway. This is Aspartate carbamoyltransferase catalytic subunit from Acidiphilium cryptum (strain JF-5).